The primary structure comprises 146 residues: 1,4-dihydroxy-2-naphthoyl-CoA hydrolase (146 aa).

Residue aspartate 15 is part of the active site.

Belongs to the 4-hydroxybenzoyl-CoA thioesterase family. DHNA-CoA hydrolase subfamily.

It catalyses the reaction 1,4-dihydroxy-2-naphthoyl-CoA + H2O = 1,4-dihydroxy-2-naphthoate + CoA + H(+). Its pathway is cofactor biosynthesis; phylloquinone biosynthesis. The protein operates within quinol/quinone metabolism; 1,4-dihydroxy-2-naphthoate biosynthesis; 1,4-dihydroxy-2-naphthoate from chorismate: step 7/7. Catalyzes the hydrolysis of 1,4-dihydroxy-2-naphthoyl-CoA (DHNA-CoA) to 1,4-dihydroxy-2-naphthoate (DHNA), a reaction involved in phylloquinone (vitamin K1) biosynthesis. The polypeptide is 1,4-dihydroxy-2-naphthoyl-CoA hydrolase (Picosynechococcus sp. (strain ATCC 27264 / PCC 7002 / PR-6) (Agmenellum quadruplicatum)).